The following is a 481-amino-acid chain: Drebrin-like protein (481 aa).

One can recognise an ADF-H domain in the interval 3 to 131 (SLDISDPDIT…DEKAITAALN (129 aa)). Residues 217-227 (YWKQQQAEKQK) are compositionally biased toward basic and acidic residues. The interval 217-423 (YWKQQQAEKQ…PAEEQYDQSG (207 aa)) is disordered. Residues 228-237 (QQQQQQQQQA) show a composition bias toward low complexity. The span at 248–261 (TVGNKFQEQVSKPT) shows a compositional bias: polar residues. Positions 291-300 (PPAPSRPAAP) are enriched in pro residues. Residues 325-335 (QYEEPQYEEEQ) show a composition bias toward acidic residues. Low complexity predominate over residues 336 to 413 (QQQYEEQPTE…YQEEQQQYEQ (78 aa)). The SH3 domain maps to 422–481 (SGYLQAKALYDYNGENDGDLSFREGDIITILDQSDPDGWWQGSLPTGEQGFFPSNFVQQL).

It belongs to the ABP1 family.

Its subcellular location is the cytoplasm. The protein localises to the cytoskeleton. It localises to the cell projection. The protein resides in the pseudopodium. Its function is as follows. Actin-binding adapter protein. Binds to F-actin but is not involved in actin polymerization, capping or bundling. Does not bind G-actin. Controls pseudopodium number and motility in early stages of chemotactic aggregation. The protein is Drebrin-like protein (abpE-1) of Dictyostelium discoideum (Social amoeba).